The following is a 932-amino-acid chain: 2-oxoglutarate dehydrogenase E1 component (932 aa).

It belongs to the alpha-ketoglutarate dehydrogenase family. In terms of assembly, homodimer. Part of the 2-oxoglutarate dehydrogenase (OGDH) complex composed of E1 (2-oxoglutarate dehydrogenase), E2 (dihydrolipoamide succinyltransferase) and E3 (dihydrolipoamide dehydrogenase); the complex contains multiple copies of the three enzymatic components (E1, E2 and E3). It depends on thiamine diphosphate as a cofactor.

It carries out the reaction N(6)-[(R)-lipoyl]-L-lysyl-[protein] + 2-oxoglutarate + H(+) = N(6)-[(R)-S(8)-succinyldihydrolipoyl]-L-lysyl-[protein] + CO2. In terms of biological role, E1 component of the 2-oxoglutarate dehydrogenase (OGDH) complex which catalyzes the decarboxylation of 2-oxoglutarate, the first step in the conversion of 2-oxoglutarate to succinyl-CoA and CO(2). This Staphylococcus aureus (strain MW2) protein is 2-oxoglutarate dehydrogenase E1 component.